A 472-amino-acid polypeptide reads, in one-letter code: 4-O-methyl-glucuronoyl methylesterase 1 (472 aa).

The first 20 residues, 1-20 (MKSAAYLAALAAVLPAYVNA), serve as a signal peptide directing secretion. The 36-residue stretch at 21-56 (QAQEWGQCGGIGWTGATTCVSGTVCTVLNPYYSQCL) folds into the CBM1 domain. The disordered stretch occupies residues 62-97 (TAPPPPPPPPTSVSSSSSSSTSSAPPSGPSGTSPTC). Residues 63–72 (APPPPPPPPT) are compositionally biased toward pro residues. The span at 73-96 (SVSSSSSSSTSSAPPSGPSGTSPT) shows a compositional bias: low complexity. Intrachain disulfides connect C97/C131, C283/C419, and C315/C391. The GXSYXG catalytic site motif motif lies at 282 to 287 (GCSRDG). S284 acts as the Nucleophile in catalysis. K288, Q330, E338, and W382 together coordinate substrate. H418 (proton donor/acceptor) is an active-site residue. N-linked (GlcNAc...) asparagine glycosylation is present at N465.

The protein belongs to the carbohydrate esterase 15 (CE15) family.

The protein resides in the secreted. It catalyses the reaction a 4-O-methyl-alpha-D-glucuronosyl ester derivative + H2O = 4-O-methyl-alpha-D-glucuronate derivative + an alcohol + H(+). In terms of biological role, glucuronoyl esterase which may play a significant role in biomass degradation, as it is considered to disconnect hemicellulose from lignin through the hydrolysis of the ester bond between 4-O-methyl-D-glucuronic acid residues of glucuronoxylans and aromatic alcohols of lignin. Can hydrolyze benzyl glucuronic acid (BnGlcA), allyl glucuronic acid (allylGlcA) and to a lower degree methyl glucuronic acid (MeGlcA) in vitro. The polypeptide is 4-O-methyl-glucuronoyl methylesterase 1 (Phanerochaete chrysosporium (strain RP-78 / ATCC MYA-4764 / FGSC 9002) (White-rot fungus)).